The primary structure comprises 495 residues: UDP-N-acetylmuramate--L-alanine ligase (495 aa).

153–159 is a binding site for ATP; sequence GTHGKTT.

Belongs to the MurCDEF family.

It is found in the cytoplasm. It catalyses the reaction UDP-N-acetyl-alpha-D-muramate + L-alanine + ATP = UDP-N-acetyl-alpha-D-muramoyl-L-alanine + ADP + phosphate + H(+). The protein operates within cell wall biogenesis; peptidoglycan biosynthesis. Its function is as follows. Cell wall formation. This chain is UDP-N-acetylmuramate--L-alanine ligase, found in Gloeothece citriformis (strain PCC 7424) (Cyanothece sp. (strain PCC 7424)).